The following is a 273-amino-acid chain: uncharacterized protein (273 aa).

The span at 1–10 (MSSKKVKYNP) shows a compositional bias: basic residues. 2 disordered regions span residues 1–32 (MSSK…FGFN) and 50–124 (EDVE…QSSP). 3 stretches are compositionally biased toward polar residues: residues 12 to 24 (KSAS…SASA), 55 to 64 (QSFNGKSSNL), and 92 to 124 (PQSS…QSSP). A Phosphoserine modification is found at Ser-123.

It localises to the nucleus. It is found in the cytoplasm. Its subcellular location is the cytoskeleton. The protein resides in the spindle. This is an uncharacterized protein from Schizosaccharomyces pombe (strain 972 / ATCC 24843) (Fission yeast).